A 391-amino-acid chain; its full sequence is MATVIQNPLKALGDQFYREAIEHCRSYNARLCAERSVRMPFLDSQTGVAQNNCYIWMEKRHRGPGMAAGQMYTYPARCWRKKRRLHTPLDPQLRLCELRLEAELMAKREAPQTEATALEALLRGDGILDKRNNNAKEEETLLEIQRVLEADENGDGFHDDEDFEVDTPKRKHRNKGRGRGSGRRRTEAVANDDQDKPYVCDNRYKQKHNSKTADSVCGKRYKNRPGLSYHYAHTHLAEEEGEEERETEIPQSPPVHHENHKPQKAPDGSIIPNDYCDFCLGDSGSNRKTGQAEELVSCSDCGRSGHPSCLQFTDNMMQAVRTYQWQCIECKSCSLCGTSENDDQLLFCDDCDRGYHMYCLKPPMTQPPEGSWSCHLCQNLLKDKASGVEDP.

A compositionally biased stretch (acidic residues) spans 152–165 (ENGDGFHDDEDFEV). 2 disordered regions span residues 152–200 (ENGD…PYVC) and 236–266 (LAEE…QKAP). Residues 169–183 (KRKHRNKGRGRGSGR) are compositionally biased toward basic residues. Residues 198–235 (YVCDNRYKQKHNSKTADSVCGKRYKNRPGLSYHYAHTH) form a C2H2-type zinc finger. 2 PHD-type zinc fingers span residues 273 to 333 (NDYC…CKSC) and 330 to 380 (CKSC…CQNL).

Component of the BAF complex. Interacts with acetylated histones H3 and H4. Component of neuron-specific chromatin remodeling complex (nBAF complex), a subfamily of ATP-dependent SWI/SNF chromatin remodeling complexes. Expressed in the heart and somites.

Its subcellular location is the nucleus. Functionally, muscle-specific component of the BAF complex, a multiprotein complex involved in transcriptional activation and repression of select genes by chromatin remodeling (alteration of DNA-nucleosome topology). Specifically binds acetylated lysines on histone 3 and 4. In the complex, it acts as a tissue-specific anchor between histone acetylations and methylations and chromatin remodeling. Belongs to the neuron-specific chromatin remodeling complex (nBAF complex) and may play a role in neural development. Plays an essential role in heart and skeletal muscle development. This chain is Zinc finger protein DPF3 (dpf3), found in Danio rerio (Zebrafish).